We begin with the raw amino-acid sequence, 243 residues long: EFFHGWYMEPLTKGRYPDIMRQIVGTRLPNFTEDEAELVAGSYDFLGLNYYVTQYAKPKPNPYPSEKHTAMDDAGVDLTFKNSRGEYPGPVFAEDANSYYYPKGIYYVMDYFKTKYGNPLIYITENGISTPGSESRCERIADYKRINYHCSHLCFLSKVIKEKGVNVRGYFAWALGDNYEFGKGFTVRFGLSYVNWDDLNDRNLKESGKWYQRFINGTAKNPVKQNFLRSSLSSQNQKKRLAC.

N-linked (GlcNAc...) asparagine glycosylation is present at asparagine 30. Tyrosine 51 contributes to the substrate binding site. Catalysis depends on glutamate 125, which acts as the Nucleophile. Substrate contacts are provided by residues tryptophan 173 and 180 to 181 (EF). A glycan (N-linked (GlcNAc...) asparagine) is linked at asparagine 216.

It belongs to the glycosyl hydrolase 1 family. Homodimer. In vacuoles called myrosin grains of a certain class of cells, myrosin cells, distributed in the cotyledons and the axis of the embryo as well as in different organs of the growing plant.

Its subcellular location is the vacuole. The enzyme catalyses a thioglucoside + H2O = a sugar + a thiol.. Functionally, degradation of glucosinolates (glucose residue linked by a thioglucoside bound to an amino acid derivative) to glucose, sulfate and any of the products: thiocyanates, isothiocyanates, nitriles, epithionitriles or oxazolidine-2-thiones. The sequence is that of Myrosinase MB2 from Sinapis alba (White mustard).